A 374-amino-acid polypeptide reads, in one-letter code: Negative elongation factor E (374 aa).

A coiled-coil region spans residues 7 to 36; that stretch reads GLSEEEEALQKKFNKLKKKKKALLALKKQS. Positions 30-43 are enriched in low complexity; that stretch reads LALKKQSSSSTASQ. Residues 30–58 are disordered; it reads LALKKQSSSSTASQGGVKRSLSEQPVVDT. Ser51 carries the phosphoserine modification. Lys78 participates in a covalent cross-link: Glycyl lysine isopeptide (Lys-Gly) (interchain with G-Cter in SUMO1); alternate. A Glycyl lysine isopeptide (Lys-Gly) (interchain with G-Cter in SUMO2); alternate cross-link involves residue Lys78. Residues 79–252 form a disordered region; sequence AETKNSGFKR…SDSFPERRAP (174 aa). Lys82 is covalently cross-linked (Glycyl lysine isopeptide (Lys-Gly) (interchain with G-Cter in SUMO2)). Residues 90–101 are compositionally biased toward basic and acidic residues; that stretch reads RTLEGKLKDPEK. Residues Ser113 and Ser115 each carry the phosphoserine modification. The residue at position 122 (Glu122) is a PolyADP-ribosyl glutamic acid. Phosphoserine is present on residues Ser131 and Ser139. The residue at position 151 (Glu151) is a PolyADP-ribosyl glutamic acid. Ser165 is subject to Phosphoserine. Residue Glu172 is modified to PolyADP-ribosyl glutamic acid. Residues Ser179, Ser181, Ser185, and Ser187 each carry the phosphoserine modification. Tandem repeats lie at residues 184 to 185, 186 to 187, 188 to 189, 190 to 191, 192 to 193, 194 to 195, 196 to 197, 198 to 199, 200 to 201, 202 to 203, 204 to 205, 206 to 207, 208 to 209, 210 to 211, 212 to 213, 214 to 215, 216 to 217, 218 to 219, 220 to 221, 222 to 223, 224 to 225, 226 to 227, 228 to 229, 230 to 231, 232 to 233, 234 to 235, and 236 to 237. Positions 184-237 are 27 X 2 AA approximate tandem repeats of R-[DSNE]; sequence RSRSRDRSRERNRDRDRDRDRERDRERDRDRDRDRERDRDRDRDRDRDRERDRE. Positions 186–250 are enriched in basic and acidic residues; the sequence is RSRDRSRERN…RRSDSFPERR (65 aa). Ser191 carries the post-translational modification Phosphoserine. Phosphoserine is present on residues Ser243 and Ser245. The RRM domain occupies 256–326; sequence NTLYVYGEDM…VQLKVSIARK (71 aa). A phosphothreonine mark is found at Thr266 and Thr268. Ser275 and Ser347 each carry phosphoserine. Glu368 bears the PolyADP-ribosyl glutamic acid mark.

The protein belongs to the RRM NELF-E family. In terms of assembly, the NELF complex is composed of NELFA, NELFB, NELFCD and NELFE. Interacts with NELFB. Post-translationally, phosphorylated by the P-TEFb complex at sites next to its RNA recognition motif, promoting its release from chromatin. In terms of processing, sumoylated. Poly-ADP-ribosylated by PARP1, thereby preventing RNA-binding and relieving transcription pausing.

It is found in the nucleus. It localises to the chromosome. Essential component of the NELF complex, a complex that negatively regulates the elongation of transcription by RNA polymerase II. The NELF complex, which acts via an association with the DSIF complex and causes transcriptional pausing, is counteracted by the P-TEFb kinase complex. Provides the strongest RNA binding activity of the NELF complex and may initially recruit the NELF complex to RNA. This chain is Negative elongation factor E (NELFE), found in Bos taurus (Bovine).